We begin with the raw amino-acid sequence, 448 residues long: Phosphoglucosamine mutase (448 aa).

Serine 100 functions as the Phosphoserine intermediate in the catalytic mechanism. Serine 100, aspartate 240, aspartate 242, and aspartate 244 together coordinate Mg(2+). Serine 100 bears the Phosphoserine mark.

This sequence belongs to the phosphohexose mutase family. It depends on Mg(2+) as a cofactor. Post-translationally, activated by phosphorylation.

The catalysed reaction is alpha-D-glucosamine 1-phosphate = D-glucosamine 6-phosphate. Functionally, catalyzes the conversion of glucosamine-6-phosphate to glucosamine-1-phosphate. The protein is Phosphoglucosamine mutase of Bacillus cereus (strain ATCC 10987 / NRS 248).